The sequence spans 1652 residues: Venom factor (1652 aa).

Positions 1–22 (MEGMALYLVAALLIGFPASSFG) are cleaved as a signal peptide. 4 residues coordinate Mg(2+): P519, D542, V543, and D545. 12 disulfides stabilise this stretch: C547-C808, C616-C651, C684-C711, C685-C718, C698-C719, C864-C1502, C1347-C1478, C1378-C1447, C1495-C1500, C1507-C1579, C1526-C1650, and C1626-C1635. A propeptide spanning residues 657–740 (RRRRRSVVLL…REDELFLARS (84 aa)) is cleaved from the precursor. The C3a-like domain stretch occupies residues 661 to 739 (RSVVLLDSKA…KREDELFLAR (79 aa)). Residues 684–719 (CCEDGMHENPMGYSCEKREKYIQEGDACKAAFLECC) form the Anaphylatoxin-like domain. A factor B binding site region spans residues 743–754 (EDEFFGEDNIIS). Residues 992–1270 (HLIITPSGCG…VVGFQGLAEY (279 aa)) constitute a propeptide that is removed on maturation. Positions 992-1270 (HLIITPSGCG…VVGFQGLAEY (279 aa)) are C3d-like domain. Residues 1000 to 1003 (CGEQ) constitute a cross-link (isoglutamyl cysteine thioester (Cys-Gln)). A factor H binding site region spans residues 1197–1260 (VLMAASTERN…GGTYGQTQAT (64 aa)). The 144-residue stretch at 1507-1650 (CSLLNQQKKI…LSNTLTIFGC (144 aa)) folds into the NTR domain.

It belongs to the venom complement C3 homolog family. Heterotrimer of alpha, beta and gamma chains; disulfide-linked. Is active with factor B in the presence of factor D. First processed by the removal of 4 Arg residues by furin-type protease, forming two chains, alpha and gamma/beta precursor, linked by a disulfide bond. Probably, a cobrin-like protease cleaves the C3a-like domain and then the C3d-like domain, generating the mature venom factor (VF). In terms of tissue distribution, expressed by the venom gland.

The protein localises to the secreted. In terms of biological role, complement-activating protein in venom. It is a structural and functional analog of complement component C3b, the activated form of C3. It binds factor B (CFB), which is subsequently cleaved by factor D (CFD) to form the bimolecular complex VF/Bb. VF/Bb is a C3/C5 convertase that cleaves both complement components C3 and C5. Structurally, it resembles the C3b degradation product C3c, which is not able to form a C3/C5 convertase. Unlike C3b/Bb, VF/Bb is a stable complex and completely resistant to the actions of complement regulatory factors H (CFH) and I (CFI). Therefore, VF continuously activates complement resulting in the depletion of complement activity. The sequence is that of Venom factor from Crotalus adamanteus (Eastern diamondback rattlesnake).